Consider the following 66-residue polypeptide: Small ribosomal subunit protein bS21A (66 aa).

Residues Lys34–Lys46 show a composition bias toward basic residues. Positions Lys34–Asp66 are disordered.

This sequence belongs to the bacterial ribosomal protein bS21 family.

This Geobacter sulfurreducens (strain ATCC 51573 / DSM 12127 / PCA) protein is Small ribosomal subunit protein bS21A.